A 314-amino-acid polypeptide reads, in one-letter code: ATP synthase gamma chain (314 aa).

Belongs to the ATPase gamma chain family. In terms of assembly, F-type ATPases have 2 components, CF(1) - the catalytic core - and CF(0) - the membrane proton channel. CF(1) has five subunits: alpha(3), beta(3), gamma(1), delta(1), epsilon(1). CF(0) has three main subunits: a, b and c.

It is found in the cellular thylakoid membrane. Its function is as follows. Produces ATP from ADP in the presence of a proton gradient across the membrane. The gamma chain is believed to be important in regulating ATPase activity and the flow of protons through the CF(0) complex. The polypeptide is ATP synthase gamma chain (Picosynechococcus sp. (strain ATCC 27264 / PCC 7002 / PR-6) (Agmenellum quadruplicatum)).